The primary structure comprises 129 residues: MAAAAMEADEQHRIRFQLELEFVQCLANPNYLNFLAQRGYFKDKSFVNYLKYLLYWKDPEYAKYLKYPQCLHMLELLQYEHFRKELVNAQCAKFIDEQQILHWQHYSRKRMRMQQALAEQQQQNNTSSK.

It belongs to the Mediator complex subunit 31 family. In terms of assembly, component of the Mediator complex.

It is found in the nucleus. Its function is as follows. Component of the Mediator complex, a coactivator involved in the regulated transcription of nearly all RNA polymerase II-dependent genes. Mediator functions as a bridge to convey information from gene-specific regulatory proteins to the basal RNA polymerase II transcription machinery. Mediator is recruited to promoters by direct interactions with regulatory proteins and serves as a scaffold for the assembly of a functional preinitiation complex with RNA polymerase II and the general transcription factors. In Xenopus laevis (African clawed frog), this protein is Mediator of RNA polymerase II transcription subunit 31-B (med31-b).